A 622-amino-acid polypeptide reads, in one-letter code: Pyranose 2-oxidase (622 aa).

The N-terminal stretch at 1 to 28 (MSASSSDPFHSFAKTSFTSKAAKRATAH) is a signal peptide. Positions 29–37 (SLPPLPGPG) are excised as a propeptide. H167 carries the post-translational modification Tele-8alpha-FAD histidine. The substrate site is built by Q449 and H451. H546 serves as the catalytic Proton acceptor. N591 is an active-site residue.

The protein belongs to the GMC oxidoreductase family. In terms of assembly, homotetramer. Requires FAD as cofactor. Not glycosylated.

It is found in the periplasm. The catalysed reaction is D-glucose + O2 = 2-dehydro-D-glucose + H2O2. Functionally, catalyzes the oxidation of various aldopyranoses and disaccharides on carbon-2 to the corresponding 2-keto sugars concomitant with the reduction of O(2) to H(2)O(2). Plays an important role in lignin degradation of wood rot fungi by supplying the essential cosubstrate H(2)O(2) for the ligninolytic peroxidases, lignin peroxidase and manganese-dependent peroxidase. The preferred substrate is D-glucose which is converted to 2-dehydro-D-glucose, an intermediate of a secondary metabolic pathway leading to the antibiotic cortalcerone. Also acts on D-xylose, together with D-glucose the major sugars derived from wood, on L-sorbose, D-galactose and 1,5-anhydroglucitol, a diagnostic marker of diabetes mellitus. The polypeptide is Pyranose 2-oxidase (p2ox) (Phlebiopsis gigantea (White-rot fungus)).